The chain runs to 78 residues: Structural DNA-binding protein p10 (78 aa).

Over residues 1–24 (MPTKAGTKSTANKKTTKGSSKSGS) the composition is skewed to low complexity. The segment at 1–41 (MPTKAGTKSTANKKTTKGSSKSGSPRGHTGKTHAPPSMHSG) is disordered.

This sequence belongs to the asfivirus P10 family.

Its subcellular location is the virion. In terms of biological role, may play a role in genome packaging through direct interaction with viral DNA. Binds to ssDNA and dsDNA with the same apparent affinity in vitro. This chain is Structural DNA-binding protein p10, found in African swine fever virus (isolate Tick/South Africa/Pretoriuskop Pr4/1996) (ASFV).